The primary structure comprises 419 residues: Serine hydroxymethyltransferase (419 aa).

(6S)-5,6,7,8-tetrahydrofolate contacts are provided by residues Leu-121 and 125–127; that span reads GHL. Position 230 is an N6-(pyridoxal phosphate)lysine (Lys-230). 355–357 contacts (6S)-5,6,7,8-tetrahydrofolate; that stretch reads SPF.

This sequence belongs to the SHMT family. In terms of assembly, homodimer. It depends on pyridoxal 5'-phosphate as a cofactor.

It localises to the cytoplasm. The enzyme catalyses (6R)-5,10-methylene-5,6,7,8-tetrahydrofolate + glycine + H2O = (6S)-5,6,7,8-tetrahydrofolate + L-serine. It participates in one-carbon metabolism; tetrahydrofolate interconversion. The protein operates within amino-acid biosynthesis; glycine biosynthesis; glycine from L-serine: step 1/1. In terms of biological role, catalyzes the reversible interconversion of serine and glycine with tetrahydrofolate (THF) serving as the one-carbon carrier. This reaction serves as the major source of one-carbon groups required for the biosynthesis of purines, thymidylate, methionine, and other important biomolecules. Also exhibits THF-independent aldolase activity toward beta-hydroxyamino acids, producing glycine and aldehydes, via a retro-aldol mechanism. This is Serine hydroxymethyltransferase from Streptococcus equi subsp. zooepidemicus (strain MGCS10565).